Here is a 352-residue protein sequence, read N- to C-terminus: Histidine biosynthesis bifunctional protein HisB (352 aa).

The histidinol-phosphatase stretch occupies residues 1–163 (MKKILFIDRD…MVASAIINDA (163 aa)). The active-site Nucleophile is the aspartate 8. Aspartate 8 and aspartate 10 together coordinate Mg(2+). Aspartate 10 functions as the Proton donor in the catalytic mechanism. Residues cysteine 91, histidine 93, cysteine 99, and cysteine 101 each coordinate Zn(2+). Aspartate 128 is a binding site for Mg(2+). The imidazoleglycerol-phosphate dehydratase stretch occupies residues 164–352 (RKASVQRKTK…NYLPSTKGVL (189 aa)).

In the N-terminal section; belongs to the histidinol-phosphatase family. It in the C-terminal section; belongs to the imidazoleglycerol-phosphate dehydratase family. Requires Mg(2+) as cofactor. Zn(2+) is required as a cofactor.

The protein resides in the cytoplasm. The enzyme catalyses D-erythro-1-(imidazol-4-yl)glycerol 3-phosphate = 3-(imidazol-4-yl)-2-oxopropyl phosphate + H2O. The catalysed reaction is L-histidinol phosphate + H2O = L-histidinol + phosphate. It functions in the pathway amino-acid biosynthesis; L-histidine biosynthesis; L-histidine from 5-phospho-alpha-D-ribose 1-diphosphate: step 6/9. Its pathway is amino-acid biosynthesis; L-histidine biosynthesis; L-histidine from 5-phospho-alpha-D-ribose 1-diphosphate: step 8/9. In Legionella pneumophila subsp. pneumophila (strain Philadelphia 1 / ATCC 33152 / DSM 7513), this protein is Histidine biosynthesis bifunctional protein HisB.